Consider the following 152-residue polypeptide: Interleukin-1 family member 10 (152 aa).

It belongs to the IL-1 family. Interacts with cargo receptor TMED10; the interaction mediates the translocation from the cytoplasm into the ERGIC (endoplasmic reticulum-Golgi intermediate compartment) and thereby secretion. Expressed in fetal skin, spleen and tonsil. Expressed mostly in the basal epithelia of skin and in proliferating B-cells of the tonsil.

The protein localises to the cytoplasm. It is found in the secreted. Functionally, cytokine with immunomodulatory activity. Alone, does not induce cytokine production, but reduces IL22 and IL17A production by T-cells in response to heat-killed Candida albicans. Reduces IL36G-induced production of IL8 by peripheral blood mononuclear cells. Increases IL6 production by dendritic cells stimulated by bacterial lipopolysaccharides (LPS). Ligand for IL-36R/IL1RL2. This Homo sapiens (Human) protein is Interleukin-1 family member 10.